Here is a 277-residue protein sequence, read N- to C-terminus: Large ribosomal subunit protein uL2 (277 aa).

Positions 212-277 (RWRGKRPHVR…KFIVRGRKSK (66 aa)) are disordered. Basic residues predominate over residues 254–277 (TAGKKTRDKKKASTKFIVRGRKSK).

The protein belongs to the universal ribosomal protein uL2 family. As to quaternary structure, part of the 50S ribosomal subunit. Forms a bridge to the 30S subunit in the 70S ribosome.

Functionally, one of the primary rRNA binding proteins. Required for association of the 30S and 50S subunits to form the 70S ribosome, for tRNA binding and peptide bond formation. It has been suggested to have peptidyltransferase activity; this is somewhat controversial. Makes several contacts with the 16S rRNA in the 70S ribosome. In Leuconostoc citreum (strain KM20), this protein is Large ribosomal subunit protein uL2.